A 1755-amino-acid polypeptide reads, in one-letter code: Transposon Ty1-DR6 Gag-Pol polyprotein (1755 aa).

Polar residues-rich tracts occupy residues 1 to 23, 48 to 60, and 127 to 152; these read MESQ…SVTS, TKAN…TPAS, and QSQF…GNTF. Disordered regions lie at residues 1–93, 126–174, and 352–421; these read MESQ…MMTQ, PQSQ…PPPM, and GSRN…SKST. Low complexity predominate over residues 153-165; it reads TDSSSADSDMTST. The RNA-binding stretch occupies residues 299 to 401; it reads NNGIHINNKV…NSKSKTARAH (103 aa). The segment covering 402–418 has biased composition (low complexity); the sequence is NVSTSNNSPSTDNDSIS. Position 416 is a phosphoserine (Ser-416). Catalysis depends on Asp-461, which acts as the For protease activity; shared with dimeric partner. The segment at 583–640 is integrase-type zinc finger-like; it reads NVHTSESTRKYPYPFIHRMLAHANAQTIRYSLKNNTITYFNESDVDWSSAIDYQCPDC. The Integrase catalytic domain maps to 660–835; the sequence is NSYEPFQYLH…AGLDISTLLP (176 aa). Positions 671 and 736 each coordinate Mg(2+). Disordered stretches follow at residues 956–1087, 1092–1111, and 1130–1187; these read SKAV…ETEK, RSPS…NIVP, and DLPL…DNET. A compositionally biased stretch (low complexity) spans 960–969; that stretch reads SPTDSTPPST. Positions 1005 to 1015 are enriched in polar residues; the sequence is STPQISNIEST. The segment covering 1038-1053 has biased composition (basic and acidic residues); that stretch reads ESSHASKSKDFRHSDS. Polar residues-rich tracts occupy residues 1054-1082 and 1101-1111; these read YSEN…QISD and PENNSSHNIVP. Positions 1178-1212 match the Bipartite nuclear localization signal motif; sequence KKRSLEDNETEIKVSRDTWNTKNMRSLEPPRSKKR. Residues 1338-1476 form the Reverse transcriptase Ty1/copia-type domain; the sequence is NNYYITQLDI…DILGLEIKYQ (139 aa). 6 residues coordinate Mg(2+): Asp-1346, Asp-1427, Asp-1428, Asp-1610, Glu-1652, and Asp-1685. An RNase H Ty1/copia-type domain is found at 1610-1752; sequence DASYGNQPYY…IKTFKLLTNK (143 aa).

As to quaternary structure, the capsid protein forms a homotrimer, from which the VLPs are assembled. The protease is a homodimer, whose active site consists of two apposed aspartic acid residues. Initially, virus-like particles (VLPs) are composed of the structural unprocessed proteins Gag and Gag-Pol, and also contain the host initiator methionine tRNA (tRNA(i)-Met) which serves as a primer for minus-strand DNA synthesis, and a dimer of genomic Ty RNA. Processing of the polyproteins occurs within the particle and proceeds by an ordered pathway, called maturation. First, the protease (PR) is released by autocatalytic cleavage of the Gag-Pol polyprotein yielding capsid protein p45 and a Pol-p154 precursor protein. This cleavage is a prerequisite for subsequent processing of Pol-p154 at the remaining sites to release the mature structural and catalytic proteins. Maturation takes place prior to the RT reaction and is required to produce transposition-competent VLPs.

It localises to the cytoplasm. The protein localises to the nucleus. It catalyses the reaction DNA(n) + a 2'-deoxyribonucleoside 5'-triphosphate = DNA(n+1) + diphosphate. The catalysed reaction is Endonucleolytic cleavage to 5'-phosphomonoester.. Its function is as follows. Capsid protein (CA) is the structural component of the virus-like particle (VLP), forming the shell that encapsulates the retrotransposons dimeric RNA genome. The particles are assembled from trimer-clustered units and there are holes in the capsid shells that allow for the diffusion of macromolecules. CA also has nucleocapsid-like chaperone activity, promoting primer tRNA(i)-Met annealing to the multipartite primer-binding site (PBS), dimerization of Ty1 RNA and initiation of reverse transcription. The aspartyl protease (PR) mediates the proteolytic cleavages of the Gag and Gag-Pol polyproteins after assembly of the VLP. In terms of biological role, reverse transcriptase/ribonuclease H (RT) is a multifunctional enzyme that catalyzes the conversion of the retro-elements RNA genome into dsDNA within the VLP. The enzyme displays a DNA polymerase activity that can copy either DNA or RNA templates, and a ribonuclease H (RNase H) activity that cleaves the RNA strand of RNA-DNA heteroduplexes during plus-strand synthesis and hydrolyzes RNA primers. The conversion leads to a linear dsDNA copy of the retrotransposon that includes long terminal repeats (LTRs) at both ends. Functionally, integrase (IN) targets the VLP to the nucleus, where a subparticle preintegration complex (PIC) containing at least integrase and the newly synthesized dsDNA copy of the retrotransposon must transit the nuclear membrane. Once in the nucleus, integrase performs the integration of the dsDNA into the host genome. This chain is Transposon Ty1-DR6 Gag-Pol polyprotein (TY1B-DR6), found in Saccharomyces cerevisiae (strain ATCC 204508 / S288c) (Baker's yeast).